Consider the following 120-residue polypeptide: Small ribosomal subunit protein bS16 (120 aa).

Residues 84-110 show a composition bias toward basic and acidic residues; that stretch reads KREVKSNPEKAKPGKRAQERAAEKAQK. The segment at 84–120 is disordered; that stretch reads KREVKSNPEKAKPGKRAQERAAEKAQKAADAAAATAE. Residues 111 to 120 are compositionally biased toward low complexity; that stretch reads AADAAAATAE.

Belongs to the bacterial ribosomal protein bS16 family.

This chain is Small ribosomal subunit protein bS16, found in Rhizobium rhizogenes (strain K84 / ATCC BAA-868) (Agrobacterium radiobacter).